The primary structure comprises 192 residues: Cytochrome c oxidase assembly protein CtaG (192 aa).

The Cytoplasmic segment spans residues Met1–Thr9. A helical; Signal-anchor for type II membrane protein transmembrane segment spans residues Ala10–Phe30. The Periplasmic portion of the chain corresponds to Tyr31–Asn192.

Belongs to the COX11/CtaG family.

Its subcellular location is the cell inner membrane. Functionally, exerts its effect at some terminal stage of cytochrome c oxidase synthesis, probably by being involved in the insertion of the copper B into subunit I. In Cereibacter sphaeroides (strain ATCC 17025 / ATH 2.4.3) (Rhodobacter sphaeroides), this protein is Cytochrome c oxidase assembly protein CtaG.